A 619-amino-acid chain; its full sequence is 1-deoxy-D-xylulose-5-phosphate synthase (619 aa).

Thiamine diphosphate contacts are provided by residues histidine 74 and 115–117 (GHS). Residue aspartate 146 participates in Mg(2+) binding. Thiamine diphosphate contacts are provided by residues 147–148 (GA), asparagine 175, tyrosine 285, and glutamate 365. A Mg(2+)-binding site is contributed by asparagine 175.

It belongs to the transketolase family. DXPS subfamily. Homodimer. Mg(2+) serves as cofactor. Requires thiamine diphosphate as cofactor.

It catalyses the reaction D-glyceraldehyde 3-phosphate + pyruvate + H(+) = 1-deoxy-D-xylulose 5-phosphate + CO2. Its pathway is metabolic intermediate biosynthesis; 1-deoxy-D-xylulose 5-phosphate biosynthesis; 1-deoxy-D-xylulose 5-phosphate from D-glyceraldehyde 3-phosphate and pyruvate: step 1/1. Its function is as follows. Catalyzes the acyloin condensation reaction between C atoms 2 and 3 of pyruvate and glyceraldehyde 3-phosphate to yield 1-deoxy-D-xylulose-5-phosphate (DXP). The protein is 1-deoxy-D-xylulose-5-phosphate synthase of Clostridium perfringens (strain SM101 / Type A).